Consider the following 103-residue polypeptide: Large ribosomal subunit protein bL21 (103 aa).

It belongs to the bacterial ribosomal protein bL21 family. As to quaternary structure, part of the 50S ribosomal subunit. Contacts protein L20.

Its function is as follows. This protein binds to 23S rRNA in the presence of protein L20. The protein is Large ribosomal subunit protein bL21 of Yersinia enterocolitica serotype O:8 / biotype 1B (strain NCTC 13174 / 8081).